The primary structure comprises 112 residues: MSDELQSRTCTPCRGDVPPMTKAEAKRQLAQTPAWTLSDDGRCIERSFTFDDFKDAMSFVAKLGELAETEGHHPDICFGWGWARVTWQTKKINGLHDNDFIMAAKTDGLAPT.

Residues 1–30 (MSDELQSRTCTPCRGDVPPMTKAEAKRQLA) are disordered.

This sequence belongs to the pterin-4-alpha-carbinolamine dehydratase family.

It carries out the reaction (4aS,6R)-4a-hydroxy-L-erythro-5,6,7,8-tetrahydrobiopterin = (6R)-L-erythro-6,7-dihydrobiopterin + H2O. This chain is Putative pterin-4-alpha-carbinolamine dehydratase, found in Aromatoleum aromaticum (strain DSM 19018 / LMG 30748 / EbN1) (Azoarcus sp. (strain EbN1)).